Here is a 304-residue protein sequence, read N- to C-terminus: dTDP-4-dehydrorhamnose reductase (304 aa).

Residues 15-17 (GQL), 41-42 (DI), and 63-65 (AYT) contribute to the NADH site. Residues 16–17 (QL), 41–42 (DI), and 63–65 (AYT) each bind NADPH. 104 to 105 (TD) provides a ligand contact to dTDP-beta-L-rhamnose. Positions 132 and 136 each coordinate NADH. NADPH-binding residues include Y132 and K136. The active-site Proton donor/acceptor is Y132. W157 contributes to the dTDP-beta-L-rhamnose binding site.

This sequence belongs to the dTDP-4-dehydrorhamnose reductase family. The cofactor is Mg(2+).

The enzyme catalyses dTDP-beta-L-rhamnose + NADP(+) = dTDP-4-dehydro-beta-L-rhamnose + NADPH + H(+). Its pathway is carbohydrate biosynthesis; dTDP-L-rhamnose biosynthesis. Involved in the biosynthesis of the dTDP-L-rhamnose which is a component of the critical linker, D-N-acetylglucosamine-L-rhamnose disaccharide, which connects the galactan region of arabinogalactan to peptidoglycan via a phosphodiester linkage. Catalyzes the reduction of dTDP-6-deoxy-L-lyxo-4-hexulose to yield dTDP-L-rhamnose. The sequence is that of dTDP-4-dehydrorhamnose reductase from Mycobacterium tuberculosis (strain CDC 1551 / Oshkosh).